The sequence spans 505 residues: Catalase (505 aa).

A disordered region spans residues 1 to 25 (MSKQDGKLTGLFGAPVSDRENSMTA). Residues histidine 56 and asparagine 129 contribute to the active site. Tyrosine 339 contributes to the heme binding site.

The protein belongs to the catalase family. As to quaternary structure, homodimer. It depends on heme as a cofactor.

It catalyses the reaction 2 H2O2 = O2 + 2 H2O. Decomposes hydrogen peroxide into water and oxygen; serves to protect cells from the toxic effects of hydrogen peroxide. The polypeptide is Catalase (katA) (Staphylococcus warneri).